A 702-amino-acid chain; its full sequence is Elongation factor G 2 (702 aa).

In terms of domain architecture, tr-type G spans 8-291 (ELYRNIGIVA…AVIDYLPAPS (284 aa)). GTP-binding positions include 17–24 (AHVDAGKT), 89–93 (DTPGH), and 143–146 (NKMD). The interval 293-314 (IPAIRGTDPDDEEKHDERHADD) is disordered.

Belongs to the TRAFAC class translation factor GTPase superfamily. Classic translation factor GTPase family. EF-G/EF-2 subfamily.

It is found in the cytoplasm. Its function is as follows. Catalyzes the GTP-dependent ribosomal translocation step during translation elongation. During this step, the ribosome changes from the pre-translocational (PRE) to the post-translocational (POST) state as the newly formed A-site-bound peptidyl-tRNA and P-site-bound deacylated tRNA move to the P and E sites, respectively. Catalyzes the coordinated movement of the two tRNA molecules, the mRNA and conformational changes in the ribosome. The chain is Elongation factor G 2 (fusB) from Pseudomonas aeruginosa (strain ATCC 15692 / DSM 22644 / CIP 104116 / JCM 14847 / LMG 12228 / 1C / PRS 101 / PAO1).